The chain runs to 1046 residues: Suppressor of Mek1 (1046 aa).

The WH1 domain occupies 1–101; that stretch reads MEPLRKRVKV…QDIWENILQY (101 aa). Residues 626-1046 form a disordered region; it reads FESPETSCNN…SSPTPSELHV (421 aa). The segment covering 665–689 has biased composition (acidic residues); that stretch reads IDEEEEEAYFNRDDDSEDSDDEDEL. Positions 695–713 are enriched in low complexity; it reads NNNNNNNNNNKQICTNNEN. A compositionally biased stretch (basic and acidic residues) spans 714 to 727; the sequence is NMEKNDDNIEKDNE. Residues 743–752 show a composition bias toward acidic residues; that stretch reads YEDEDDEDDE. Residues 753–783 are compositionally biased toward basic and acidic residues; the sequence is INKSVESDDIVEKHEIIDKNEKKDEIMKENN. Acidic residues predominate over residues 784 to 803; the sequence is DSDNDDNDNNDNDNDNDNNS. Residues 804–820 are compositionally biased toward low complexity; the sequence is DIENKNHLNNNGNNENN. 2 stretches are compositionally biased toward basic and acidic residues: residues 826-855 and 862-876; these read VQDKSNNKNNSDKINEDEKIEKQDEMKENL and EKVKEKQPKDIKKEN. A compositionally biased stretch (low complexity) spans 889–905; it reads SNNSNNNNNNNNNNSNN. Residues 909–935 are compositionally biased toward basic and acidic residues; sequence GDNRKTTPKRKLDYEKNESVVSKKIDK. The segment covering 958–995 has biased composition (low complexity); the sequence is NNNNSNNNNNNNNNNNNNNNNNNNNNNNNNNNNNNNQN. Positions 996–1011 are enriched in acidic residues; it reads DENELSSASEEEEEQL. Positions 1003–1022 match the Nuclear localization signal motif; that stretch reads ASEEEEEQLENGKHIKKFKR. Low complexity predominate over residues 1028-1038; the sequence is NNSSNNSNNSS.

It belongs to the SMEK family. In terms of assembly, interacts with ppp4c.

It is found in the cytoplasm. Its subcellular location is the cell cortex. The protein localises to the nucleus. Suppresses MEK1 null cell polarity, chemotaxis, and gene expression defects. Required for proper cytokinesis during vegetative growth, timely exit from the mound stage during development, and myosin II assembly. May be a regulatory subunit of serine/threonine-protein phosphatase 4 (PP4) and may control localization of PP4 to the nucleus. Involved in the regulation of some ppp4c functions, such as developmental progression, chemotaxis, expression of stress response genes and cell movement. This Dictyostelium discoideum (Social amoeba) protein is Suppressor of Mek1 (smkA).